The sequence spans 28 residues: Alpha-(1-6)-linked fucose-specific lectin (28 aa).

As to quaternary structure, homohexamer. Expressed by mycelium-forming spores.

Its subcellular location is the secreted. In terms of biological role, alpha-(1-6)-linked L-fucose specific lectin. The protein is Alpha-(1-6)-linked fucose-specific lectin of Rhizopus stolonifer (Rhizopus nigricans).